The primary structure comprises 129 residues: Large ribosomal subunit protein bL17 (129 aa).

Belongs to the bacterial ribosomal protein bL17 family. In terms of assembly, part of the 50S ribosomal subunit. Contacts protein L32.

The polypeptide is Large ribosomal subunit protein bL17 (Serratia proteamaculans (strain 568)).